The following is a 108-amino-acid chain: Probable endonuclease 4 (108 aa).

The Zn(2+) site is built by H2, H36, D49, H51, and E81.

Belongs to the AP endonuclease 2 family. Requires Zn(2+) as cofactor.

It carries out the reaction Endonucleolytic cleavage to 5'-phosphooligonucleotide end-products.. In terms of biological role, endonuclease IV plays a role in DNA repair. It cleaves phosphodiester bonds at apurinic or apyrimidinic (AP) sites, generating a 3'-hydroxyl group and a 5'-terminal sugar phosphate. The polypeptide is Probable endonuclease 4 (nfo) (Thermotoga neapolitana).